Here is an 862-residue protein sequence, read N- to C-terminus: Putative PIP5K1A and PSMD4-like protein (862 aa).

In terms of domain architecture, PIPK spans 28-396 (TSSALKGAIQ…WFQRFMCNTV (369 aa)). 2 disordered regions span residues 404-424 (PSPS…GSSG) and 453-481 (HLGC…PSFS). The segment covering 412–424 (SGSSFSQRAGSSG) has biased composition (low complexity). The region spanning 490 to 673 (MLTTSVDNSE…LADALISFPI (184 aa)) is the VWFA domain. The 20-residue stretch at 696-715 (SADPELALVLRVFMEEQRQR) folds into the UIM 1 domain. Residues 716–740 (QEEEARQAAAASAAEAGIATTGTED) are disordered. Residues 722–731 (QAAAASAAEA) are compositionally biased toward low complexity. The region spanning 766–783 (MTEEEKIVCAMQMSLQGA) is the UIM 2 domain. A disordered region spans residues 826 to 862 (NLPGVDPNNEAIRNAVGSLASQATKDSKKDKKEEDKK). Residues 850-862 (KDSKKDKKEEDKK) are compositionally biased toward basic and acidic residues.

Testis-specific.

Its subcellular location is the cytoplasm. In terms of biological role, has negligible PIP5 kinase activity. Binds to ubiquitinated proteins. This Homo sapiens (Human) protein is Putative PIP5K1A and PSMD4-like protein (PIPSL).